The following is a 513-amino-acid chain: Type-2 serine--tRNA ligase (513 aa).

Residue alanine 312 coordinates L-serine. Cysteine 314 lines the Zn(2+) pocket. An L-serine-binding site is contributed by arginine 344. ATP-binding positions include 344-346 (RWE) and 355-356 (RV). L-serine is bound at residue 361–363 (RVE). Glutamate 363 and cysteine 467 together coordinate Zn(2+). Arginine 474 is a binding site for ATP.

Belongs to the class-II aminoacyl-tRNA synthetase family. Type-2 seryl-tRNA synthetase subfamily. In terms of assembly, homodimer. Requires Zn(2+) as cofactor.

Its subcellular location is the cytoplasm. The enzyme catalyses tRNA(Ser) + L-serine + ATP = L-seryl-tRNA(Ser) + AMP + diphosphate + H(+). It carries out the reaction tRNA(Sec) + L-serine + ATP = L-seryl-tRNA(Sec) + AMP + diphosphate + H(+). It participates in aminoacyl-tRNA biosynthesis; selenocysteinyl-tRNA(Sec) biosynthesis; L-seryl-tRNA(Sec) from L-serine and tRNA(Sec): step 1/1. Catalyzes the attachment of serine to tRNA(Ser). Is also able to aminoacylate tRNA(Sec) with serine, to form the misacylated tRNA L-seryl-tRNA(Sec), which will be further converted into selenocysteinyl-tRNA(Sec). This chain is Type-2 serine--tRNA ligase (serS), found in Methanothermobacter thermautotrophicus (strain ATCC 29096 / DSM 1053 / JCM 10044 / NBRC 100330 / Delta H) (Methanobacterium thermoautotrophicum).